Reading from the N-terminus, the 609-residue chain is Dihydroxy-acid dehydratase (609 aa).

A Mg(2+)-binding site is contributed by Asp-82. Cys-123 contacts [2Fe-2S] cluster. Positions 124 and 125 each coordinate Mg(2+). N6-carboxylysine is present on Lys-125. Position 192 (Cys-192) interacts with [2Fe-2S] cluster. Mg(2+) is bound at residue Glu-489. The active-site Proton acceptor is the Ser-515.

This sequence belongs to the IlvD/Edd family. In terms of assembly, homodimer. [2Fe-2S] cluster serves as cofactor. It depends on Mg(2+) as a cofactor.

The enzyme catalyses (2R)-2,3-dihydroxy-3-methylbutanoate = 3-methyl-2-oxobutanoate + H2O. It catalyses the reaction (2R,3R)-2,3-dihydroxy-3-methylpentanoate = (S)-3-methyl-2-oxopentanoate + H2O. The protein operates within amino-acid biosynthesis; L-isoleucine biosynthesis; L-isoleucine from 2-oxobutanoate: step 3/4. It participates in amino-acid biosynthesis; L-valine biosynthesis; L-valine from pyruvate: step 3/4. Its function is as follows. Functions in the biosynthesis of branched-chain amino acids. Catalyzes the dehydration of (2R,3R)-2,3-dihydroxy-3-methylpentanoate (2,3-dihydroxy-3-methylvalerate) into 2-oxo-3-methylpentanoate (2-oxo-3-methylvalerate) and of (2R)-2,3-dihydroxy-3-methylbutanoate (2,3-dihydroxyisovalerate) into 2-oxo-3-methylbutanoate (2-oxoisovalerate), the penultimate precursor to L-isoleucine and L-valine, respectively. The sequence is that of Dihydroxy-acid dehydratase from Azobacteroides pseudotrichonymphae genomovar. CFP2.